The following is a 500-amino-acid chain: Histidinol dehydrogenase homolog 1 (500 aa).

The tract at residues 1–25 (MPPAGGIFHRPPTTRKSRRLTPRSA) is disordered. A compositionally biased stretch (basic residues) spans 12-21 (PTTRKSRRLT). The Zn(2+) site is built by Q313 and H316. Residues E381 and H382 each act as proton acceptor in the active site. Zn(2+) is bound by residues D415 and H475.

It belongs to the histidinol dehydrogenase family. Zn(2+) is required as a cofactor.

The sequence is that of Histidinol dehydrogenase homolog 1 from Mesorhizobium japonicum (strain LMG 29417 / CECT 9101 / MAFF 303099) (Mesorhizobium loti (strain MAFF 303099)).